The primary structure comprises 740 residues: UvrABC system protein B (740 aa).

The disordered stretch occupies residues 1–36 (MTIAIRTTLDEPENHSDFVPHRPSRPEKTEPSKPFR). Over residues 8–33 (TLDEPENHSDFVPHRPSRPEKTEPSK) the composition is skewed to basic and acidic residues. The 389-residue stretch at 56-444 (KDIQKGERDQ…GGVFVEQIIR (389 aa)) folds into the Helicase ATP-binding domain. An ATP-binding site is contributed by 69-76 (GVTGSGKT). Residues 122-145 (YYDYYQPEAYVPRTDTYIEKDSAI) carry the Beta-hairpin motif. The Helicase C-terminal domain maps to 461-627 (QVDNLIFEAK…TVKRQVDDIV (167 aa)). The UVR domain maps to 651-686 (ARSISETEKEMLEAAANLEFEKAAQLRDVLHQLKRQ). The disordered stretch occupies residues 687–740 (ELGLPPEKSSEIQGRSEAGRPGTRKTRSDKAREAKASKRVKQEAGEKLLRSRGH). Residues 712–740 (TRSDKAREAKASKRVKQEAGEKLLRSRGH) are compositionally biased toward basic and acidic residues.

The protein belongs to the UvrB family. Forms a heterotetramer with UvrA during the search for lesions. Interacts with UvrC in an incision complex.

It localises to the cytoplasm. Its function is as follows. The UvrABC repair system catalyzes the recognition and processing of DNA lesions. A damage recognition complex composed of 2 UvrA and 2 UvrB subunits scans DNA for abnormalities. Upon binding of the UvrA(2)B(2) complex to a putative damaged site, the DNA wraps around one UvrB monomer. DNA wrap is dependent on ATP binding by UvrB and probably causes local melting of the DNA helix, facilitating insertion of UvrB beta-hairpin between the DNA strands. Then UvrB probes one DNA strand for the presence of a lesion. If a lesion is found the UvrA subunits dissociate and the UvrB-DNA preincision complex is formed. This complex is subsequently bound by UvrC and the second UvrB is released. If no lesion is found, the DNA wraps around the other UvrB subunit that will check the other stand for damage. The chain is UvrABC system protein B from Zymomonas mobilis subsp. mobilis (strain ATCC 31821 / ZM4 / CP4).